We begin with the raw amino-acid sequence, 103 residues long: Muscarinic toxin BM14 (103 aa).

Residues 1 to 21 form the signal peptide; the sequence is MKTLLLTLVVVTIICLDLGYT. Disulfide bonds link C24–C45, C27–C37, C38–C72, C76–C90, and C91–C96.

It belongs to the three-finger toxin family. Ancestral subfamily. Orphan group XVII sub-subfamily. As to expression, expressed by the venom gland.

Its subcellular location is the secreted. This toxin inhibits the binding of [3H]quinuclidinyl benzilate to the M2 muscarinic acetylcholine (mAchR) receptor subtype (CHRM2). This Bungarus multicinctus (Many-banded krait) protein is Muscarinic toxin BM14.